Consider the following 459-residue polypeptide: FAD-dependent monooxygenase CTB5 (459 aa).

In terms of domain architecture, FAD-binding PCMH-type spans 10-187 (SDLHPSCIAL…TAVTLKAFEQ (178 aa)).

Belongs to the oxygen-dependent FAD-linked oxidoreductase family.

The protein operates within mycotoxin biosynthesis. FAD-dependent monooxygenase; part of the gene cluster that mediates the biosynthesis of cercosporin, a light-activated, non-host-selective toxin. The perylenequinone chromophore of cercosporin absorbs light energy to attain an electronically-activated triplet state and produces active oxygen species such as the hydroxyl radical, superoxide, hydrogen peroxide or singlet oxygen upon reaction with oxygen molecules. These reactive oxygen species cause damage to various cellular components including lipids, proteins and nucleic acids. The first step of cercosporin biosynthesis is performed by the polyketide synthase CTB1 which catalyzes the formation of nor-toralactone. The starter unit acyltransferase (SAT) domain of CTB1 initiates polyketide extension by the selective utilization of acetyl-CoA, which is elongated to the heptaketide in the beta-ketoacyl synthase (KS) domain by successive condensations with six malonyl units introduced by the malonyl acyltransferase (MAT) domain. The product template (PT) domain catalyzes C4-C9 and C2-C11 aldol cyclizations and dehydrations to a trihydroxynaphthalene, which is thought to be delivered to the thioesterase (TE) domain for product release. The bifunctional enzyme CTB3 then methylates nor-toralactone to toralactone before conducting an unusual oxidative aromatic ring opening. The O-methyltransferase CTB2 further methylates the nascent OH-6 of the CBT3 product, blocking further oxidation at this site before the reductase CTB6 reduces the 2-oxopropyl ketone at position C7, giving naphthalene. The FAD-dependent monooxygenase CTB5 in concert with the multicopper oxidase CTB12 are responsible for homodimerization of naphthalene with CTB7 installing the dioxepine moiety, finally producing cercosporin. The fasciclin domain-containing protein CTB11 might act with CTB5 and CTB12 whereas the roles of CTB9 and CTB10 have still to be elucidated. The protein is FAD-dependent monooxygenase CTB5 of Cercospora nicotianae (Barn spot disease fungus).